Reading from the N-terminus, the 359-residue chain is Membrane-bound lytic murein transglycosylase C (359 aa).

The signal sequence occupies residues 1–16; it reads MKKYLALALIAPLLIS. A lipid anchor (N-palmitoyl cysteine) is attached at Cys-17. Cys-17 is lipidated: S-diacylglycerol cysteine.

This sequence belongs to the transglycosylase Slt family.

The protein resides in the cell outer membrane. The enzyme catalyses Exolytic cleavage of the (1-&gt;4)-beta-glycosidic linkage between N-acetylmuramic acid (MurNAc) and N-acetylglucosamine (GlcNAc) residues in peptidoglycan, from either the reducing or the non-reducing ends of the peptidoglycan chains, with concomitant formation of a 1,6-anhydrobond in the MurNAc residue.. In terms of biological role, murein-degrading enzyme. May play a role in recycling of muropeptides during cell elongation and/or cell division. This Shigella flexneri serotype 5b (strain 8401) protein is Membrane-bound lytic murein transglycosylase C.